The sequence spans 64 residues: Large ribosomal subunit protein bL35 (64 aa).

A disordered region spans residues 1–55 (MPKMKTNKSVSARFKLTASGQLKRTRPGKRHKLSKKSSQEKRNLSKQPLVDKGQV). Positions 23–35 (KRTRPGKRHKLSK) are enriched in basic residues.

Belongs to the bacterial ribosomal protein bL35 family.

The sequence is that of Large ribosomal subunit protein bL35 from Chlamydia pneumoniae (Chlamydophila pneumoniae).